A 121-amino-acid chain; its full sequence is Large ribosomal subunit protein uL22 (121 aa).

The protein belongs to the universal ribosomal protein uL22 family. Part of the 50S ribosomal subunit.

Functionally, this protein binds specifically to 23S rRNA; its binding is stimulated by other ribosomal proteins, e.g. L4, L17, and L20. It is important during the early stages of 50S assembly. It makes multiple contacts with different domains of the 23S rRNA in the assembled 50S subunit and ribosome. In terms of biological role, the globular domain of the protein is located near the polypeptide exit tunnel on the outside of the subunit, while an extended beta-hairpin is found that lines the wall of the exit tunnel in the center of the 70S ribosome. The chain is Large ribosomal subunit protein uL22 from Rickettsia massiliae (strain Mtu5).